A 309-amino-acid polypeptide reads, in one-letter code: Protein FdhE homolog (309 aa).

The protein belongs to the FdhE family.

The protein localises to the cytoplasm. Necessary for formate dehydrogenase activity. The sequence is that of Protein FdhE homolog from Pectobacterium atrosepticum (strain SCRI 1043 / ATCC BAA-672) (Erwinia carotovora subsp. atroseptica).